The chain runs to 473 residues: Bactericidal permeability-increasing protein (473 aa).

Residues 1–18 (MVLCCWLALVALIPMTLS) form the signal peptide. The interval 19 to 29 (INPGVKVRLTG) is central sheet, part 1. Positions 28–209 (TGKGLEYGRQ…SDLNPQLKTL (182 aa)) are N-terminal barrel. Cysteines 153 and 192 form a disulfide. The interval 211-275 (VLAKVDQYAE…INNMLYISVS (65 aa)) is central sheet, part 2. The cleavage sites for elastase stretch occupies residues 225–230 (MVSSPT). The segment at 276–446 (AFTINSAAFV…LAKGYPLPTL (171 aa)) is C-terminal barrel. An N-linked (GlcNAc...) asparagine glycan is attached at N365. Residues 453 to 472 (NTELQVLKDYMLIGTDVQFT) form a central sheet, part 3 region.

It belongs to the BPI/LBP/Plunc superfamily. BPI/LBP family. In terms of assembly, monomer. Homodimer; disulfide-linked. Expressed in spleen. Lower expression in gill, head kidney, entire kidney, skin, intestine and blood and lowest expression in liver and muscle.

The protein resides in the secreted. The cytotoxic action of BPI is limited to many species of Gram-negative bacteria; this specificity may be explained by a strong affinity of the very basic N-terminal half for the negatively charged lipopolysaccharides that are unique to the Gram-negative bacterial outer envelope. Exhibits neutralizing capacity towards P.aeruginosa lipopolysaccharides (LPS) and has bactericidal activity against multiple drug resistant (MDR) P.aeruginosa strains derived from people with cystic fibrosis. Has antibacterial activity against E.coli, but not against S.iniae. The chain is Bactericidal permeability-increasing protein from Sebastes schlegelii (Korean rockfish).